The primary structure comprises 313 residues: Bifunctional pinoresinol-lariciresinol reductase 1 (313 aa).

NADP(+)-binding positions include 11–17 (GGTGYIG), arginine 36, and lysine 45. The active-site Proton acceptor is lysine 138. Position 142 (arginine 142) interacts with NADP(+). Histidine 271 contributes to the substrate binding site.

This sequence belongs to the NmrA-type oxidoreductase family. Isoflavone reductase subfamily. In terms of assembly, dimer.

It carries out the reaction (+)-lariciresinol + NADP(+) = (+)-pinoresinol + NADPH + H(+). The catalysed reaction is (-)-lariciresinol + NADP(+) = (-)-pinoresinol + NADPH + H(+). It catalyses the reaction (+)-secoisolariciresinol + NADP(+) = (-)-lariciresinol + NADPH + H(+). Its function is as follows. Reductase involved in lignan biosynthesis. Catalyzes the enantioselective sequential conversion of (-)-pinoresinol into (-)-lariciresinol and of (-)-lariciresinol into (+)-secoisolariciresinol. Can also convert with a lower efficiency (+)-pinoresinol into (+)-lariciresinol, but not (+)-lariciresinol into (-)-secoisolariciresinol. Abstracts the 4R-hydride from the NADPH cofactor during catalysis. The protein is Bifunctional pinoresinol-lariciresinol reductase 1 (PLR_Tp1) of Thuja plicata (Western red-cedar).